The sequence spans 456 residues: Serine--tRNA ligase (456 aa).

Disordered regions lie at residues 107 to 130 and 229 to 253; these read PHSS…GTPP and FLEN…QDDD. Basic and acidic residues predominate over residues 114 to 125; the sequence is GRSESDNREVRR. A compositionally biased stretch (polar residues) spans 239 to 248; it reads LPSNSNSPQG. 260–262 is an L-serine binding site; the sequence is TSE. ATP is bound at residue 291 to 293; it reads RSE. Glutamate 314 serves as a coordination point for L-serine. 378–381 contacts ATP; sequence EISS. Residue serine 413 coordinates L-serine.

This sequence belongs to the class-II aminoacyl-tRNA synthetase family. Type-1 seryl-tRNA synthetase subfamily. Homodimer. The tRNA molecule binds across the dimer.

Its subcellular location is the cytoplasm. The catalysed reaction is tRNA(Ser) + L-serine + ATP = L-seryl-tRNA(Ser) + AMP + diphosphate + H(+). It catalyses the reaction tRNA(Sec) + L-serine + ATP = L-seryl-tRNA(Sec) + AMP + diphosphate + H(+). Its pathway is aminoacyl-tRNA biosynthesis; selenocysteinyl-tRNA(Sec) biosynthesis; L-seryl-tRNA(Sec) from L-serine and tRNA(Sec): step 1/1. Its function is as follows. Catalyzes the attachment of serine to tRNA(Ser). Is also able to aminoacylate tRNA(Sec) with serine, to form the misacylated tRNA L-seryl-tRNA(Sec), which will be further converted into selenocysteinyl-tRNA(Sec). The sequence is that of Serine--tRNA ligase from Nitrosospira multiformis (strain ATCC 25196 / NCIMB 11849 / C 71).